A 428-amino-acid chain; its full sequence is Histidine--tRNA ligase (428 aa).

This sequence belongs to the class-II aminoacyl-tRNA synthetase family. As to quaternary structure, homodimer.

The protein resides in the cytoplasm. The catalysed reaction is tRNA(His) + L-histidine + ATP = L-histidyl-tRNA(His) + AMP + diphosphate + H(+). The polypeptide is Histidine--tRNA ligase (Bordetella avium (strain 197N)).